We begin with the raw amino-acid sequence, 248 residues long: MASTVALKGRPLATLLRQLLAADAPPAATGRPVAAAPAASGKPVTAPAAATATNAASRRLYNTEGAPLRRYDVVDESGTDSGDEYDATDDGRRLTVPFFFSASDVLDPFGAPTSLGRLLALMEDAAVATAAAPGTNGLATAAARRGGWWVAKEDDDAVHLKVSMPGLGKEHVKVWAEQNSLVIKGEGEKDPEDDADAAPPRYTRRIELPADAFKMDKIKAEMKNGVLRVAVPKLKEEERKDVFQVNVE.

The transit peptide at 1-32 (MASTVALKGRPLATLLRQLLAADAPPAATGRP) directs the protein to the mitochondrion. The disordered stretch occupies residues 26-48 (PAATGRPVAAAPAASGKPVTAPA). Positions 139 to 248 (ATAAARRGGW…RKDVFQVNVE (110 aa)) constitute a sHSP domain.

The protein belongs to the small heat shock protein (HSP20) family. In terms of assembly, may form oligomeric structures.

It localises to the mitochondrion. This is 26.2 kDa heat shock protein, mitochondrial (HSP26.2) from Oryza sativa subsp. japonica (Rice).